Consider the following 159-residue polypeptide: 6,7-dimethyl-8-ribityllumazine synthase (159 aa).

5-amino-6-(D-ribitylamino)uracil-binding positions include Trp26, 57–59 (ALE), and 79–81 (CVI). Residue 84–85 (GT) coordinates (2S)-2-hydroxy-3-oxobutyl phosphate. The active-site Proton donor is the His87. Asn112 serves as a coordination point for 5-amino-6-(D-ribitylamino)uracil. Arg126 provides a ligand contact to (2S)-2-hydroxy-3-oxobutyl phosphate.

The protein belongs to the DMRL synthase family.

It catalyses the reaction (2S)-2-hydroxy-3-oxobutyl phosphate + 5-amino-6-(D-ribitylamino)uracil = 6,7-dimethyl-8-(1-D-ribityl)lumazine + phosphate + 2 H2O + H(+). The protein operates within cofactor biosynthesis; riboflavin biosynthesis; riboflavin from 2-hydroxy-3-oxobutyl phosphate and 5-amino-6-(D-ribitylamino)uracil: step 1/2. Catalyzes the formation of 6,7-dimethyl-8-ribityllumazine by condensation of 5-amino-6-(D-ribitylamino)uracil with 3,4-dihydroxy-2-butanone 4-phosphate. This is the penultimate step in the biosynthesis of riboflavin. The polypeptide is 6,7-dimethyl-8-ribityllumazine synthase (Corynebacterium efficiens (strain DSM 44549 / YS-314 / AJ 12310 / JCM 11189 / NBRC 100395)).